Here is a 139-residue protein sequence, read N- to C-terminus: Translation initiation factor 5A (139 aa).

Residue lysine 36 is modified to Hypusine.

The protein belongs to the eIF-5A family.

The protein resides in the cytoplasm. Functionally, functions by promoting the formation of the first peptide bond. The protein is Translation initiation factor 5A (eif5a) of Aeropyrum pernix (strain ATCC 700893 / DSM 11879 / JCM 9820 / NBRC 100138 / K1).